Consider the following 477-residue polypeptide: Glycogen synthase (477 aa).

K15 provides a ligand contact to ADP-alpha-D-glucose.

Belongs to the glycosyltransferase 1 family. Bacterial/plant glycogen synthase subfamily.

It catalyses the reaction [(1-&gt;4)-alpha-D-glucosyl](n) + ADP-alpha-D-glucose = [(1-&gt;4)-alpha-D-glucosyl](n+1) + ADP + H(+). It participates in glycan biosynthesis; glycogen biosynthesis. Its function is as follows. Synthesizes alpha-1,4-glucan chains using ADP-glucose. The protein is Glycogen synthase (glgA) of Salmonella typhimurium (strain LT2 / SGSC1412 / ATCC 700720).